A 101-amino-acid polypeptide reads, in one-letter code: Small ribosomal subunit protein uS14 (101 aa).

The segment covering 1–10 (MAKKSSIEKN) has biased composition (basic and acidic residues). The tract at residues 1 to 23 (MAKKSSIEKNNRRKRMTGNAAAK) is disordered.

It belongs to the universal ribosomal protein uS14 family. Part of the 30S ribosomal subunit. Contacts proteins S3 and S10.

In terms of biological role, binds 16S rRNA, required for the assembly of 30S particles and may also be responsible for determining the conformation of the 16S rRNA at the A site. This chain is Small ribosomal subunit protein uS14, found in Nitrobacter hamburgensis (strain DSM 10229 / NCIMB 13809 / X14).